The following is a 944-amino-acid chain: Spindle pole body component 110 (944 aa).

At Thr18 the chain carries Phosphothreonine. The tract at residues 23–110 is disordered; sequence IKSKRNTTQT…RKRNLIDDLK (88 aa). The segment covering 28-46 has biased composition (polar residues); the sequence is NTTQTQVVSPTKVPNANNG. A Nuclear localization signal motif is present at residues 54-59; that stretch reads KKRQRR. Ser60 carries the phosphoserine; by MPS1 modification. Phosphothreonine; by MPS1 occurs at positions 64 and 68. The span at 67-78 shows a compositional bias: polar residues; it reads STRLFSEASQFD. The residue at position 80 (Ser80) is a Phosphoserine. The segment covering 96-110 has biased composition (basic and acidic residues); it reads NVDKSRKRNLIDDLK. Positions 119–799 form a coiled coil; that stretch reads LKEQEVREHQ…ILNERRKDND (681 aa). Ser529 carries the post-translational modification Phosphoserine. Short sequence motifs (nuclear localization signal) lie at residues 726-731 and 742-747; these read KEKYKR and RLRREK. A calmodulin-binding region spans residues 900–927; sequence SFKTVALLVLACVRMKRIAFYRRSDDNR.

The protein belongs to the SPC110 family. As to quaternary structure, homodimer. Component of the SPC110 complex containing at least CMD1, SPC29 and SCP110. Interacts with SPC97 and SPC98.

It is found in the nucleus. It localises to the cytoplasm. The protein localises to the cytoskeleton. The protein resides in the microtubule organizing center. Its subcellular location is the spindle pole body. Its function is as follows. Component of the spindle pole body (SPB) required for the proper execution of spindle pole body (SPB) duplication. Potential role in cross-linking filaments or anchoring other molecules. It is essential for growth. The chain is Spindle pole body component 110 (SPC110) from Saccharomyces cerevisiae (strain YJM789) (Baker's yeast).